A 561-amino-acid polypeptide reads, in one-letter code: Trehalose-6-phosphate hydrolase (561 aa).

The active-site Nucleophile is D203. Residue E254 is the Proton donor of the active site.

Belongs to the glycosyl hydrolase 13 family.

The protein resides in the cytoplasm. The catalysed reaction is alpha,alpha-trehalose 6-phosphate + H2O = D-glucose 6-phosphate + D-glucose. Its activity is regulated as follows. Activity is stimulated by high salt concentrations with different efficiencies depending on the kind of salt. In vitro, inhibited by glucose. Functionally, hydrolyzes trehalose-6-phosphate to glucose and glucose 6-phosphate. Can also very effectively hydrolyze p-nitrophenyl-alpha-D-glucopyranoside, but not lactose, maltose, sucrose or sucrose-6-phosphate. Trehalose is also hydrolyzed, but to a much smaller extent than trehalose-6-phosphate. The polypeptide is Trehalose-6-phosphate hydrolase (Bacillus subtilis (strain 168)).